The primary structure comprises 445 residues: Putative ubiquitin carboxyl-terminal hydrolase L293 (445 aa).

Residues 133–441 (KALANFGNSC…SAYIILYGDI (309 aa)) form the USP domain. Residue cysteine 142 is the Nucleophile of the active site. The active-site Proton acceptor is the histidine 384.

The protein belongs to the peptidase C19 family.

Its subcellular location is the virion. It catalyses the reaction Thiol-dependent hydrolysis of ester, thioester, amide, peptide and isopeptide bonds formed by the C-terminal Gly of ubiquitin (a 76-residue protein attached to proteins as an intracellular targeting signal).. The chain is Putative ubiquitin carboxyl-terminal hydrolase L293 from Acanthamoeba polyphaga mimivirus (APMV).